The primary structure comprises 870 residues: Valine--tRNA ligase (870 aa).

Polar residues predominate over residues 1–13 (MTSQTFTTSSATP). A disordered region spans residues 1 to 21 (MTSQTFTTSSATPPTRGVVPD). The short motif at 63-73 (PTVSGHLHPGH) is the 'HIGH' region element. The tract at residues 479-505 (YDHPLLPDESALPVDPASQPPSGYQES) is disordered. The short motif at 595–599 (KMSKS) is the 'KMSKS' region element. Lys-598 is a binding site for ATP.

This sequence belongs to the class-I aminoacyl-tRNA synthetase family. ValS type 2 subfamily. As to quaternary structure, monomer.

It is found in the cytoplasm. It carries out the reaction tRNA(Val) + L-valine + ATP = L-valyl-tRNA(Val) + AMP + diphosphate. Catalyzes the attachment of valine to tRNA(Val). As ValRS can inadvertently accommodate and process structurally similar amino acids such as threonine, to avoid such errors, it has a 'posttransfer' editing activity that hydrolyzes mischarged Thr-tRNA(Val) in a tRNA-dependent manner. The sequence is that of Valine--tRNA ligase from Cutibacterium acnes (strain DSM 16379 / KPA171202) (Propionibacterium acnes).